The chain runs to 686 residues: Amyloid-beta-like protein (686 aa).

The signal sequence occupies residues methionine 1–alanine 21. The Extracellular portion of the chain corresponds to glutamate 22–glutamine 621. The tract at residues glutamate 32 to histidine 125 is GFLD subdomain. The E1 domain maps to glutamate 32–asparagine 197. 6 disulfide bridges follow: cysteine 42–cysteine 65, cysteine 76–cysteine 119, cysteine 101–cysteine 108, cysteine 135–cysteine 195, cysteine 146–cysteine 182, and cysteine 160–cysteine 194. An N-linked (GlcNAc...) asparagine glycan is attached at asparagine 84. The tract at residues histidine 133–asparagine 197 is cuBD subdomain. Asparagine 201 is a glycosylation site (N-linked (GlcNAc...) asparagine). Positions asparagine 201 to phenylalanine 245 are disordered. The span at aspartate 211–serine 239 shows a compositional bias: acidic residues. Residues serine 240–tyrosine 440 enclose the E2 domain. Asparagine 249 carries N-linked (GlcNAc...) asparagine glycosylation. Heparin contacts are provided by residues asparagine 252–aspartate 255 and histidine 382. The N-linked (GlcNAc...) asparagine glycan is linked to asparagine 417. Disordered regions lie at residues proline 479–lysine 526 and lysine 550–glutamate 585. The segment covering serine 500–glutamate 516 has biased composition (acidic residues). Residues glutamine 517–lysine 526 are compositionally biased toward basic and acidic residues. Residues threonine 558 to serine 567 show a composition bias toward acidic residues. Residues proline 622–threonine 642 traverse the membrane as a helical segment. Residues asparagine 643–alanine 686 lie on the Cytoplasmic side of the membrane. Residues tyrosine 674–tyrosine 679 carry the YENPXY motif motif.

The protein belongs to the APP family. In terms of assembly, interacts (via cytoplasmic domain) with feh-1 (via PID 2 domain). In terms of processing, extracellular region is proteolytically cleaved. Expressed in the head, pharynx, spermatheca, uterus, vulva, tail and ventral neurons. Specifically expressed in nerve ring interneurons, the ventral cord, socket and amphids in the head, with strong expression in junctional cells, including the pharyngeal intestinal valve and uterine seam junction, and the excretory cell and weak expression in epidermal epithelial cells, including hyp7 cells, vulval cells, rectal valve cells, pharyngeal arcade cells and the tail hypodermis.

It localises to the membrane. The protein localises to the early endosome. In terms of biological role, required for normal developmental progression throughout all life stages. Specifically required for the molt stage during all larval transitions and morphogenesis. Acts with heterochronic genes, including members of the let-7 family, to regulate larval stage to adult transition. Acts synergistically with acn-1 in let-7 regulated postembryonic cell division of hypodermal seam cells. Acts in multiple pathways to influence daf-12 and daf-16 activity to in turn regulate physiological and reproductive processes such as body size and egg-laying. May play a role in neurotransmission. This Caenorhabditis elegans protein is Amyloid-beta-like protein.